We begin with the raw amino-acid sequence, 87 residues long: U14-lycotoxin-Ls1b (87 aa).

The signal sequence occupies residues 1 to 20 (MNSKVFAVLLLLALSTCVLS). In terms of domain architecture, WAP spans 21–66 (EKYCPTPRNTSCKKMNIRNNCCRDSDCTSNAFCCAEPCGNFCHKAS). Intrachain disulfides connect C24-C54, C32-C58, C41-C53, C42-C80, and C47-C62.

This sequence belongs to the venom protein 11 family. 01 (wap-1) subfamily. Post-translationally, contains 5 disulfide bonds. As to expression, expressed by the venom gland.

The protein resides in the secreted. In terms of biological role, has antibacterial activity. The polypeptide is U14-lycotoxin-Ls1b (Lycosa singoriensis (Wolf spider)).